We begin with the raw amino-acid sequence, 95 residues long: Small ribosomal subunit protein uS19 (95 aa).

This sequence belongs to the universal ribosomal protein uS19 family.

Protein S19 forms a complex with S13 that binds strongly to the 16S ribosomal RNA. The protein is Small ribosomal subunit protein uS19 of Thermodesulfovibrio yellowstonii (strain ATCC 51303 / DSM 11347 / YP87).